An 80-amino-acid polypeptide reads, in one-letter code: Conotoxin Ca11.3 (80 aa).

The N-terminal stretch at 1-19 is a signal peptide; it reads MKLVLAIVVILMLLSLSTG. Residues 20 to 42 constitute a propeptide that is removed on maturation; it reads AEMSDNHASRSATALRDRLLSPK. 4 cysteine pairs are disulfide-bonded: Cys46-Cys60, Cys53-Cys65, Cys59-Cys72, and Cys64-Cys79.

It belongs to the conotoxin I3 superfamily. Expressed by the venom duct.

Its subcellular location is the secreted. In Conus caracteristicus (Characteristic cone), this protein is Conotoxin Ca11.3.